The following is a 578-amino-acid chain: Arginine--tRNA ligase (578 aa).

The 'HIGH' region motif lies at 122–132 (PNLAKEMHVGH).

The protein belongs to the class-I aminoacyl-tRNA synthetase family. Monomer.

It is found in the cytoplasm. The enzyme catalyses tRNA(Arg) + L-arginine + ATP = L-arginyl-tRNA(Arg) + AMP + diphosphate. In Pseudoalteromonas atlantica (strain T6c / ATCC BAA-1087), this protein is Arginine--tRNA ligase.